The sequence spans 508 residues: Photosystem II CP47 reaction center protein (508 aa).

The next 6 membrane-spanning stretches (helical) occupy residues 21–36 (SVHI…WAGS), 101–115 (IVFS…IWHW), 140–156 (GIHL…FGAF), 203–218 (IAAG…FHLS), 237–252 (VLSS…AFVV), and 457–472 (SFAL…HGAR).

It belongs to the PsbB/PsbC family. PsbB subfamily. In terms of assembly, PSII is composed of 1 copy each of membrane proteins PsbA, PsbB, PsbC, PsbD, PsbE, PsbF, PsbH, PsbI, PsbJ, PsbK, PsbL, PsbM, PsbT, PsbX, PsbY, PsbZ, Psb30/Ycf12, at least 3 peripheral proteins of the oxygen-evolving complex and a large number of cofactors. It forms dimeric complexes. The cofactor is Binds multiple chlorophylls. PSII binds additional chlorophylls, carotenoids and specific lipids..

It localises to the plastid. The protein resides in the chloroplast thylakoid membrane. Its function is as follows. One of the components of the core complex of photosystem II (PSII). It binds chlorophyll and helps catalyze the primary light-induced photochemical processes of PSII. PSII is a light-driven water:plastoquinone oxidoreductase, using light energy to abstract electrons from H(2)O, generating O(2) and a proton gradient subsequently used for ATP formation. This is Photosystem II CP47 reaction center protein from Dioscorea elephantipes (Elephant's foot yam).